The chain runs to 368 residues: Methionine import ATP-binding protein MetN (368 aa).

Residues 5–260 enclose the ABC transporter domain; that stretch reads IELNNLSVQF…PKEALTKQFI (256 aa). 41-48 contacts ATP; the sequence is GYSGAGKS.

It belongs to the ABC transporter superfamily. Methionine importer (TC 3.A.1.24) family. In terms of assembly, the complex is composed of two ATP-binding proteins (MetN), two transmembrane proteins (MetI) and a solute-binding protein (MetQ).

It is found in the cell membrane. It carries out the reaction L-methionine(out) + ATP + H2O = L-methionine(in) + ADP + phosphate + H(+). The enzyme catalyses D-methionine(out) + ATP + H2O = D-methionine(in) + ADP + phosphate + H(+). Functionally, part of the ABC transporter complex MetNIQ involved in methionine import. Responsible for energy coupling to the transport system. The chain is Methionine import ATP-binding protein MetN from Lactococcus lactis subsp. cremoris (strain MG1363).